A 151-amino-acid polypeptide reads, in one-letter code: Transcription elongation factor GreA (151 aa).

A coiled-coil region spans residues 41 to 62 (AEYHAAREKQSFIEGRIKELEA).

It belongs to the GreA/GreB family.

Necessary for efficient RNA polymerase transcription elongation past template-encoded arresting sites. The arresting sites in DNA have the property of trapping a certain fraction of elongating RNA polymerases that pass through, resulting in locked ternary complexes. Cleavage of the nascent transcript by cleavage factors such as GreA or GreB allows the resumption of elongation from the new 3'terminus. GreA releases sequences of 2 to 3 nucleotides. This is Transcription elongation factor GreA from Cereibacter sphaeroides (strain ATCC 17023 / DSM 158 / JCM 6121 / CCUG 31486 / LMG 2827 / NBRC 12203 / NCIMB 8253 / ATH 2.4.1.) (Rhodobacter sphaeroides).